Reading from the N-terminus, the 331-residue chain is Ketol-acid reductoisomerase (NADP(+)) (331 aa).

Positions 2-182 constitute a KARI N-terminal Rossmann domain; the sequence is AKMYYDQDAD…GGTKAGAIET (181 aa). NADP(+) is bound by residues 25–28, S51, S53, and 83–86; these read FGSQ and DEKQ. H108 is an active-site residue. G134 contacts NADP(+). In terms of domain architecture, KARI C-terminal knotted spans 183–328; it reads TFKEETETDL…KSLREMMPWL (146 aa). Mg(2+) is bound by residues D191, E195, E227, and E231. S252 serves as a coordination point for substrate.

The protein belongs to the ketol-acid reductoisomerase family. The cofactor is Mg(2+).

The enzyme catalyses (2R)-2,3-dihydroxy-3-methylbutanoate + NADP(+) = (2S)-2-acetolactate + NADPH + H(+). It catalyses the reaction (2R,3R)-2,3-dihydroxy-3-methylpentanoate + NADP(+) = (S)-2-ethyl-2-hydroxy-3-oxobutanoate + NADPH + H(+). Its pathway is amino-acid biosynthesis; L-isoleucine biosynthesis; L-isoleucine from 2-oxobutanoate: step 2/4. The protein operates within amino-acid biosynthesis; L-valine biosynthesis; L-valine from pyruvate: step 2/4. Involved in the biosynthesis of branched-chain amino acids (BCAA). Catalyzes an alkyl-migration followed by a ketol-acid reduction of (S)-2-acetolactate (S2AL) to yield (R)-2,3-dihydroxy-isovalerate. In the isomerase reaction, S2AL is rearranged via a Mg-dependent methyl migration to produce 3-hydroxy-3-methyl-2-ketobutyrate (HMKB). In the reductase reaction, this 2-ketoacid undergoes a metal-dependent reduction by NADPH to yield (R)-2,3-dihydroxy-isovalerate. The protein is Ketol-acid reductoisomerase (NADP(+)) of Caldanaerobacter subterraneus subsp. tengcongensis (strain DSM 15242 / JCM 11007 / NBRC 100824 / MB4) (Thermoanaerobacter tengcongensis).